We begin with the raw amino-acid sequence, 478 residues long: MLO-like protein 13 (478 aa).

Topologically, residues 1–10 (MAEARSGSLE) are extracellular. The helical transmembrane segment at 11–31 (YTPTWVVAFICFIIVLLSLLA) threads the bilayer. Over 32-60 (ERGLHHLGKCLKRRQQDALFEALQKLKEE) the chain is Cytoplasmic. Residues 61 to 81 (LMLLGFISLMLTVSQAAIRHI) form a helical membrane-spanning segment. Residues 82-145 (CVPPALVNNM…VSVEALHQLH (64 aa)) are Extracellular-facing. The helical transmembrane segment at 146–166 (IFIFVLAVFHVIFCASTMVLG) threads the bilayer. Residues 167–276 (GARIQQWKHW…LRTLEIDFKK (110 aa)) are Cytoplasmic-facing. 2 consecutive transmembrane segments (helical) span residues 277–297 (VVSI…LNVG) and 298–318 (GWNT…MVGA). The Cytoplasmic segment spans residues 319-360 (KLEYIISSLALDVSEKRSRAEEAVITPSDELFWFHRPGIVLQ). Residues 361–381 (LIHFILFQNSFEIAFFFWILF) form a helical membrane-spanning segment. Residues 382–400 (TYGIHSCIMEKLGYLIPRL) lie on the Extracellular side of the membrane. A helical transmembrane segment spans residues 401 to 421 (VMGVLVQVLCSYSTLPLYALV). Residues 422–478 (TQMGSKFKKGIFDNVVQSTLEGWLEDTRNRGESTSEAHRIEMQPTTPESYNVQSENP) are Cytoplasmic-facing. The segment at 435-456 (NVVQSTLEGWLEDTRNRGESTS) is calmodulin-binding. Residues 449–462 (RNRGESTSEAHRIE) show a composition bias toward basic and acidic residues. Residues 449–478 (RNRGESTSEAHRIEMQPTTPESYNVQSENP) form a disordered region. The segment covering 464 to 478 (QPTTPESYNVQSENP) has biased composition (polar residues).

This sequence belongs to the MLO family.

It localises to the membrane. Its function is as follows. May be involved in modulation of pathogen defense and leaf cell death. Activity seems to be regulated by Ca(2+)-dependent calmodulin binding and seems not to require heterotrimeric G proteins. The chain is MLO-like protein 13 (MLO13) from Arabidopsis thaliana (Mouse-ear cress).